The primary structure comprises 804 residues: Leucine--tRNA ligase (804 aa).

The 'HIGH' region motif lies at 40 to 51 (PYPSGAGLHVGH). A 'KMSKS' region motif is present at residues 576-580 (KMSKS). Position 579 (lysine 579) interacts with ATP.

Belongs to the class-I aminoacyl-tRNA synthetase family.

Its subcellular location is the cytoplasm. It carries out the reaction tRNA(Leu) + L-leucine + ATP = L-leucyl-tRNA(Leu) + AMP + diphosphate. The polypeptide is Leucine--tRNA ligase (Bacillus velezensis (strain DSM 23117 / BGSC 10A6 / LMG 26770 / FZB42) (Bacillus amyloliquefaciens subsp. plantarum)).